Here is a 434-residue protein sequence, read N- to C-terminus: ATP-dependent protease ATPase subunit HslU (434 aa).

ATP-binding positions include I18, 60 to 65 (GVGKTE), D247, E312, and R384.

This sequence belongs to the ClpX chaperone family. HslU subfamily. In terms of assembly, a double ring-shaped homohexamer of HslV is capped on each side by a ring-shaped HslU homohexamer. The assembly of the HslU/HslV complex is dependent on binding of ATP.

Its subcellular location is the cytoplasm. Its function is as follows. ATPase subunit of a proteasome-like degradation complex; this subunit has chaperone activity. The binding of ATP and its subsequent hydrolysis by HslU are essential for unfolding of protein substrates subsequently hydrolyzed by HslV. HslU recognizes the N-terminal part of its protein substrates and unfolds these before they are guided to HslV for hydrolysis. The chain is ATP-dependent protease ATPase subunit HslU from Brucella melitensis biotype 2 (strain ATCC 23457).